Reading from the N-terminus, the 239-residue chain is 1-(5-phosphoribosyl)-5-[(5-phosphoribosylamino)methylideneamino] imidazole-4-carboxamide isomerase (239 aa).

Asp8 (proton acceptor) is an active-site residue. The active-site Proton donor is Asp129.

It belongs to the HisA/HisF family.

The protein localises to the cytoplasm. The enzyme catalyses 1-(5-phospho-beta-D-ribosyl)-5-[(5-phospho-beta-D-ribosylamino)methylideneamino]imidazole-4-carboxamide = 5-[(5-phospho-1-deoxy-D-ribulos-1-ylimino)methylamino]-1-(5-phospho-beta-D-ribosyl)imidazole-4-carboxamide. It participates in amino-acid biosynthesis; L-histidine biosynthesis; L-histidine from 5-phospho-alpha-D-ribose 1-diphosphate: step 4/9. The sequence is that of 1-(5-phosphoribosyl)-5-[(5-phosphoribosylamino)methylideneamino] imidazole-4-carboxamide isomerase from Bacillus cereus (strain B4264).